A 485-amino-acid chain; its full sequence is Cysteine--tRNA ligase (485 aa).

Residue Cys-28 coordinates Zn(2+). A 'HIGH' region motif is present at residues 30 to 40 (MTVYDYCHLGH). The Zn(2+) site is built by Cys-212, His-237, and Glu-241. The short motif at 269 to 273 (KMSKS) is the 'KMSKS' region element. Lys-272 contributes to the ATP binding site.

It belongs to the class-I aminoacyl-tRNA synthetase family. In terms of assembly, monomer. It depends on Zn(2+) as a cofactor.

Its subcellular location is the cytoplasm. It carries out the reaction tRNA(Cys) + L-cysteine + ATP = L-cysteinyl-tRNA(Cys) + AMP + diphosphate. The polypeptide is Cysteine--tRNA ligase (Bordetella bronchiseptica (strain ATCC BAA-588 / NCTC 13252 / RB50) (Alcaligenes bronchisepticus)).